The chain runs to 93 residues: Small ribosomal subunit protein uS19 (93 aa).

The interval E73–R93 is disordered. Residues H83 to R93 show a composition bias toward basic and acidic residues.

This sequence belongs to the universal ribosomal protein uS19 family.

Functionally, protein S19 forms a complex with S13 that binds strongly to the 16S ribosomal RNA. The polypeptide is Small ribosomal subunit protein uS19 (Streptomyces coelicolor (strain ATCC BAA-471 / A3(2) / M145)).